The primary structure comprises 150 residues: Cell division protein SepF (150 aa).

It belongs to the SepF family. In terms of assembly, homodimer. Interacts with FtsZ.

It is found in the cytoplasm. Its function is as follows. Cell division protein that is part of the divisome complex and is recruited early to the Z-ring. Probably stimulates Z-ring formation, perhaps through the cross-linking of FtsZ protofilaments. Its function overlaps with FtsA. The protein is Cell division protein SepF of Clostridium beijerinckii (strain ATCC 51743 / NCIMB 8052) (Clostridium acetobutylicum).